A 262-amino-acid polypeptide reads, in one-letter code: Adenosylcobinamide-GDP ribazoletransferase (262 aa).

A run of 5 helical transmembrane segments spans residues 41–63 (AFPF…LMAL), 68–85 (LFAA…TGAL), 115–134 (IGTY…VSAF), 141–163 (FSPL…AMVW), and 201–221 (LLFY…VAFL).

It belongs to the CobS family. As to quaternary structure, associated with a large complex of proteins. Mg(2+) serves as cofactor.

The protein resides in the cell inner membrane. The enzyme catalyses alpha-ribazole + adenosylcob(III)inamide-GDP = adenosylcob(III)alamin + GMP + H(+). It carries out the reaction alpha-ribazole 5'-phosphate + adenosylcob(III)inamide-GDP = adenosylcob(III)alamin 5'-phosphate + GMP + H(+). Its pathway is cofactor biosynthesis; adenosylcobalamin biosynthesis; adenosylcobalamin from cob(II)yrinate a,c-diamide: step 7/7. Joins adenosylcobinamide-GDP and alpha-ribazole to generate adenosylcobalamin (Ado-cobalamin). Also synthesizes adenosylcobalamin 5'-phosphate from adenosylcobinamide-GDP and alpha-ribazole 5'-phosphate. This is Adenosylcobinamide-GDP ribazoletransferase (cobV) from Sinorhizobium sp.